The chain runs to 148 residues: Single-stranded DNA-binding protein, mitochondrial (148 aa).

The transit peptide at 1-16 directs the protein to the mitochondrion; it reads MFRRPVLQVLRQFVRH. Residues 30–141 enclose the SSB domain; sequence LNRVHLLGRV…IIADNIIFLS (112 aa). Phosphoserine is present on residues S67 and S79. K113 bears the N6-acetyllysine mark. K122 carries the N6-succinyllysine modification.

As to quaternary structure, homotetramer. Interacts with MPG/AAG, through inhibition of its glycosylase activity it potentially prevents formation of DNA breaks in ssDNA, ensuring that base removal primarily occurs in dsDNA. Interacts with POLDIP2. Interacts with PRIMPOL.

The protein resides in the mitochondrion. It localises to the mitochondrion matrix. It is found in the mitochondrion nucleoid. In terms of biological role, binds preferentially and cooperatively to pyrimidine rich single-stranded DNA (ss-DNA). In vitro, required to maintain the copy number of mitochondrial DNA (mtDNA) and plays a crucial role during mtDNA replication by stimulating the activity of the replisome components POLG and TWNK at the replication fork. Promotes the activity of the gamma complex polymerase POLG, largely by organizing the template DNA and eliminating secondary structures to favor ss-DNA conformations that facilitate POLG activity. In addition it is able to promote the 5'-3' unwinding activity of the mtDNA helicase TWNK. May also function in mtDNA repair. The chain is Single-stranded DNA-binding protein, mitochondrial (SSBP1) from Pongo abelii (Sumatran orangutan).